A 202-amino-acid polypeptide reads, in one-letter code: Coiled-coil domain-containing protein mdt-28 (202 aa).

Acidic residues-rich tracts occupy residues 1–15 (MFEELDAEDGGEEQE) and 28–45 (EDIDDILGDAPDLPDDEY). Positions 1–83 (MFEELDAEDG…NEDDEEPIEP (83 aa)) are disordered. The stretch at 159–184 (IEEENLDEAIERQETIIAAAREMLNS) forms a coiled coil.

As to quaternary structure, interacts with mdt-6 and mdt-30. As to expression, ubiquitously expressed in tissues including epidermal, intestinal, pharyngeal and uterine, and is also expressed in vulval muscle cells and gut granules.

It localises to the nucleus. The protein localises to the cytoplasm. Its function is as follows. Plays a role in normal growth and development. The sequence is that of Coiled-coil domain-containing protein mdt-28 from Caenorhabditis elegans.